A 320-amino-acid chain; its full sequence is MIIVTGGAGFIGSNLVHELNRRGRTDVIVVDNLTRGEKALNLADCVIADYYDKDDFITLIEADEGLGPVEAVFHLGACSATTEWDGRYMMRNNFEYSRALFHWCQDRRIPFIYASSAAVYGGNSVFTEHPEHERPLNVYGYSKLAFDQYLRRYLDDLSAQVVGLRYFNVYGPREQHKGGMASVVHHFSRQLRESGQVRLFEGSDGYADGEQRRDFVDVSDCVRLKLWLLDHPEVSGIYNCGTGRARTFNAMAHAVIDWFGHGEIEYIPFPEHLKGRYQSYTQADLSQLRAAGCDLAFNDIETGVRNYLDAVADAPAVMPS.

NADP(+)-binding positions include 10–11 (FI), 31–32 (DN), Lys-38, Lys-53, 75–79 (LGACS), and Asn-92. Tyr-139 acts as the Proton acceptor in catalysis. Lys-143 provides a ligand contact to NADP(+). Position 168 (Asn-168) interacts with substrate. NADP(+)-binding residues include Val-169 and Lys-177. Residue Lys-177 is the Proton acceptor of the active site. Substrate is bound by residues Gly-179, His-186, 200 to 203 (FEGS), Arg-213, and Tyr-277.

Belongs to the NAD(P)-dependent epimerase/dehydratase family. HldD subfamily. Homopentamer. NADP(+) is required as a cofactor.

The enzyme catalyses ADP-D-glycero-beta-D-manno-heptose = ADP-L-glycero-beta-D-manno-heptose. Its pathway is nucleotide-sugar biosynthesis; ADP-L-glycero-beta-D-manno-heptose biosynthesis; ADP-L-glycero-beta-D-manno-heptose from D-glycero-beta-D-manno-heptose 7-phosphate: step 4/4. Functionally, catalyzes the interconversion between ADP-D-glycero-beta-D-manno-heptose and ADP-L-glycero-beta-D-manno-heptose via an epimerization at carbon 6 of the heptose. This chain is ADP-L-glycero-D-manno-heptose-6-epimerase, found in Alkalilimnicola ehrlichii (strain ATCC BAA-1101 / DSM 17681 / MLHE-1).